Reading from the N-terminus, the 33-residue chain is Cytochrome b6-f complex subunit 6 (33 aa).

The helical transmembrane segment at 4–24 threads the bilayer; it reads ITIISYFGLLLASIIFTLVLF.

The protein belongs to the PetL family. In terms of assembly, the 4 large subunits of the cytochrome b6-f complex are cytochrome b6, subunit IV (17 kDa polypeptide, PetD), cytochrome f and the Rieske protein, while the 4 small subunits are PetG, PetL, PetM and PetN. The complex functions as a dimer.

Its subcellular location is the plastid. It is found in the chloroplast thylakoid membrane. Functionally, component of the cytochrome b6-f complex, which mediates electron transfer between photosystem II (PSII) and photosystem I (PSI), cyclic electron flow around PSI, and state transitions. PetL is important for photoautotrophic growth as well as for electron transfer efficiency and stability of the cytochrome b6-f complex. In Pinus mugo (Dwarf mountain pine), this protein is Cytochrome b6-f complex subunit 6.